We begin with the raw amino-acid sequence, 804 residues long: DNA gyrase subunit B (804 aa).

The region spanning 431–546 is the Toprim domain; the sequence is CEMYIVEGDS…NGCVYIAQPP (116 aa). The Mg(2+) site is built by glutamate 437, aspartate 511, and aspartate 513.

It belongs to the type II topoisomerase GyrB family. In terms of assembly, heterotetramer, composed of two GyrA and two GyrB chains. In the heterotetramer, GyrA contains the active site tyrosine that forms a transient covalent intermediate with DNA, while GyrB binds cofactors and catalyzes ATP hydrolysis. Mg(2+) is required as a cofactor. Requires Mn(2+) as cofactor. Ca(2+) serves as cofactor.

It is found in the cytoplasm. The enzyme catalyses ATP-dependent breakage, passage and rejoining of double-stranded DNA.. Functionally, a type II topoisomerase that negatively supercoils closed circular double-stranded (ds) DNA in an ATP-dependent manner to modulate DNA topology and maintain chromosomes in an underwound state. Negative supercoiling favors strand separation, and DNA replication, transcription, recombination and repair, all of which involve strand separation. Also able to catalyze the interconversion of other topological isomers of dsDNA rings, including catenanes and knotted rings. Type II topoisomerases break and join 2 DNA strands simultaneously in an ATP-dependent manner. The chain is DNA gyrase subunit B from Chlamydia muridarum (strain MoPn / Nigg).